The primary structure comprises 324 residues: Beta-ketoacyl-[acyl-carrier-protein] synthase III (324 aa).

Active-site residues include Cys112 and His249. The interval 250 to 254 (QANRR) is ACP-binding. Residue Asn279 is part of the active site.

Belongs to the thiolase-like superfamily. FabH family. In terms of assembly, homodimer.

The protein resides in the cytoplasm. The catalysed reaction is malonyl-[ACP] + acetyl-CoA + H(+) = 3-oxobutanoyl-[ACP] + CO2 + CoA. The protein operates within lipid metabolism; fatty acid biosynthesis. Its function is as follows. Catalyzes the condensation reaction of fatty acid synthesis by the addition to an acyl acceptor of two carbons from malonyl-ACP. Catalyzes the first condensation reaction which initiates fatty acid synthesis and may therefore play a role in governing the total rate of fatty acid production. Possesses both acetoacetyl-ACP synthase and acetyl transacylase activities. Its substrate specificity determines the biosynthesis of branched-chain and/or straight-chain of fatty acids. This is Beta-ketoacyl-[acyl-carrier-protein] synthase III from Streptococcus pyogenes serotype M6 (strain ATCC BAA-946 / MGAS10394).